An 81-amino-acid chain; its full sequence is Three-finger toxin MALT0051C (81 aa).

Positions 1–21 are cleaved as a signal peptide; it reads MKTLLLTLVVVTVVCLDFGHT. 4 cysteine pairs are disulfide-bonded: Cys24/Cys43, Cys38/Cys60, Cys62/Cys73, and Cys74/Cys79.

This sequence belongs to the three-finger toxin family. Short-chain subfamily. Type I alpha-neurotoxin sub-subfamily. In terms of tissue distribution, expressed by the venom gland.

Its subcellular location is the secreted. Its function is as follows. Binds to muscle nicotinic acetylcholine receptor (nAChR) and inhibit acetylcholine from binding to the receptor, thereby impairing neuromuscular transmission. The sequence is that of Three-finger toxin MALT0051C from Micrurus altirostris (Uruguayan coral snake).